We begin with the raw amino-acid sequence, 314 residues long: Hydroxyethylthiazole kinase (314 aa).

M70 contacts substrate. 2 residues coordinate ATP: R145 and S217. G244 is a binding site for substrate.

Belongs to the Thz kinase family. It depends on Mg(2+) as a cofactor.

It catalyses the reaction 5-(2-hydroxyethyl)-4-methylthiazole + ATP = 4-methyl-5-(2-phosphooxyethyl)-thiazole + ADP + H(+). It participates in cofactor biosynthesis; thiamine diphosphate biosynthesis; 4-methyl-5-(2-phosphoethyl)-thiazole from 5-(2-hydroxyethyl)-4-methylthiazole: step 1/1. In terms of biological role, catalyzes the phosphorylation of the hydroxyl group of 4-methyl-5-beta-hydroxyethylthiazole (THZ). The protein is Hydroxyethylthiazole kinase of Bifidobacterium longum (strain NCC 2705).